The chain runs to 245 residues: GDSL esterase/lipase At4g16220 (245 aa).

A signal peptide spans 1–24; the sequence is MSSLVSRCQVIALLVLFFFGVCLA. S37 functions as the Nucleophile in the catalytic mechanism.

Belongs to the 'GDSL' lipolytic enzyme family.

It localises to the secreted. The chain is GDSL esterase/lipase At4g16220 from Arabidopsis thaliana (Mouse-ear cress).